We begin with the raw amino-acid sequence, 817 residues long: CD177 antigen (817 aa).

The first 21 residues, 1–21 (MNSIPVLTLLGVTALLPCVPA), serve as a signal peptide directing secretion. Topologically, residues 22-796 (LTCQKSSAQA…PSLAWTLRLS (775 aa)) are extracellular. Residues asparagine 115, asparagine 189, asparagine 379, and asparagine 566 are each glycosylated (N-linked (GlcNAc...) asparagine). 4 consecutive UPAR/Ly6 domains span residues 134 to 203 (CPLC…SENC), 322 to 393 (CRHC…REDC), 511 to 581 (CPLC…ERCS), and 705 to 774 (CPMC…AEES). Residues 797 to 817 (AWMLGLSALLSSLYAGICPLC) form a helical; Anchor for type IV membrane protein membrane-spanning segment.

In terms of assembly, found in a complex with integrin ITGAM/CD11b and ITGB2/CD18. Interacts with PECAM1 (via Ig-like C2-type domain 6); the interaction is Ca(2+)-dependent; the interaction is direct. Interacts with serine protease PRTN3/myeloblastin; the interaction tethers PRTN3 to the cell surface; the interaction is direct. In terms of tissue distribution, expressed in neutrophils.

It localises to the cell membrane. In association with beta-2 integrin heterodimer ITGAM/CD11b and ITGB2/CD18, mediates activation of TNF-alpha primed neutrophils including degranulation and superoxide production. In addition, by preventing beta-2 integrin internalization and attenuating chemokine signaling favors adhesion over migration. Heterophilic interaction with PECAM1 on endothelial cells plays a role in neutrophil transendothelial migration in vitro. However, appears to be dispensable for neutrophil recruitment caused by bacterial infection in vivo. Acts as a receptor for the mature form of protease PRTN3 allowing its display at the cell surface of neutrophils. By displaying PRTN3 at the neutrophil cell surface, may play a role in enhancing endothelial cell junctional integrity and thus vascular integrity during neutrophil diapedesis. The chain is CD177 antigen (Cd177) from Mus musculus (Mouse).